Here is a 444-residue protein sequence, read N- to C-terminus: Serine--tRNA ligase (444 aa).

243-245 (TAE) serves as a coordination point for L-serine. ATP is bound at residue 274-276 (RSE). Glu-297 lines the L-serine pocket. An ATP-binding site is contributed by 361-364 (EISS). L-serine is bound at residue Ser-397.

Belongs to the class-II aminoacyl-tRNA synthetase family. Type-1 seryl-tRNA synthetase subfamily. As to quaternary structure, homodimer. The tRNA molecule binds across the dimer.

It localises to the cytoplasm. The enzyme catalyses tRNA(Ser) + L-serine + ATP = L-seryl-tRNA(Ser) + AMP + diphosphate + H(+). It carries out the reaction tRNA(Sec) + L-serine + ATP = L-seryl-tRNA(Sec) + AMP + diphosphate + H(+). It participates in aminoacyl-tRNA biosynthesis; selenocysteinyl-tRNA(Sec) biosynthesis; L-seryl-tRNA(Sec) from L-serine and tRNA(Sec): step 1/1. Catalyzes the attachment of serine to tRNA(Ser). Is also able to aminoacylate tRNA(Sec) with serine, to form the misacylated tRNA L-seryl-tRNA(Sec), which will be further converted into selenocysteinyl-tRNA(Sec). The protein is Serine--tRNA ligase of Acidobacterium capsulatum (strain ATCC 51196 / DSM 11244 / BCRC 80197 / JCM 7670 / NBRC 15755 / NCIMB 13165 / 161).